Consider the following 363-residue polypeptide: MADTFKESPIKSVQVEALVVMKIAKHCSSSFPTIATGSIVGMDNDTLVEVTNSLNFPTVDVANVDSHQSERDASAQAAAAPRSKANLMYQAEMIKHLREVNVDANCVGWYTSATMGNFVTMSFIENQAHYQRENPKAIALVHDVSRSSQASLSLRAFRLSTAFMTALKENKFTTENLQKTKLTYKDILIEMPVVIHNSHLLTTYLHQIPSAPAAGSETTIPTSLAALQREPVNIPPYPSIDSLELSIDPFLEKTCDLLLDSIEAHYTDLNNHQYYQRQMTREQAKITAWQAKRKAENAARAAAKQEPLPDDEWKRLFKLPQEPSRLEGMLNARQVEQYSKQVDGFTANVSAKMFAVRGSLLTE.

In terms of domain architecture, MPN spans 13–163 (VQVEALVVMK…LRAFRLSTAF (151 aa)).

It belongs to the eIF-3 subunit H family. As to quaternary structure, component of the eukaryotic translation initiation factor 3 (eIF-3) complex.

The protein localises to the cytoplasm. In terms of biological role, component of the eukaryotic translation initiation factor 3 (eIF-3) complex, which is involved in protein synthesis of a specialized repertoire of mRNAs and, together with other initiation factors, stimulates binding of mRNA and methionyl-tRNAi to the 40S ribosome. The eIF-3 complex specifically targets and initiates translation of a subset of mRNAs involved in cell proliferation. This Pyricularia oryzae (strain 70-15 / ATCC MYA-4617 / FGSC 8958) (Rice blast fungus) protein is Eukaryotic translation initiation factor 3 subunit H.